A 447-amino-acid chain; its full sequence is Tektin-4 (447 aa).

3 coiled-coil regions span residues 114–143, 324–348, and 375–423; these read KSEL…RALD, KILS…DKEA, and FRLM…TNSL.

Belongs to the tektin family. In terms of assembly, microtubule inner protein component of sperm flagellar doublet microtubules. Ubiquitinated, leading to its degradation. Deubiquitinated by USP16, promoting its stability.

It is found in the cytoplasm. The protein localises to the cytoskeleton. It localises to the cilium axoneme. Its subcellular location is the flagellum axoneme. Microtubule inner protein (MIP) part of the dynein-decorated doublet microtubules (DMTs) in cilia and flagellar axoneme. Forms filamentous polymers in the walls of ciliary and flagellar microtubules. Contributes to normal sperm motility. This chain is Tektin-4 (Tekt4), found in Rattus norvegicus (Rat).